A 278-amino-acid chain; its full sequence is Orotidine 5'-phosphate decarboxylase (278 aa).

The active-site Proton donor is the Lys-95.

Belongs to the OMP decarboxylase family. Type 2 subfamily.

The enzyme catalyses orotidine 5'-phosphate + H(+) = UMP + CO2. It participates in pyrimidine metabolism; UMP biosynthesis via de novo pathway; UMP from orotate: step 2/2. The polypeptide is Orotidine 5'-phosphate decarboxylase (Mycobacterium marinum (strain ATCC BAA-535 / M)).